The following is a 351-amino-acid chain: Tetraacyldisaccharide 4'-kinase (351 aa).

Residue 61–68 (TAGGTGKT) coordinates ATP.

It belongs to the LpxK family.

It carries out the reaction a lipid A disaccharide + ATP = a lipid IVA + ADP + H(+). It functions in the pathway glycolipid biosynthesis; lipid IV(A) biosynthesis; lipid IV(A) from (3R)-3-hydroxytetradecanoyl-[acyl-carrier-protein] and UDP-N-acetyl-alpha-D-glucosamine: step 6/6. Its function is as follows. Transfers the gamma-phosphate of ATP to the 4'-position of a tetraacyldisaccharide 1-phosphate intermediate (termed DS-1-P) to form tetraacyldisaccharide 1,4'-bis-phosphate (lipid IVA). In Xanthomonas campestris pv. campestris (strain 8004), this protein is Tetraacyldisaccharide 4'-kinase.